The primary structure comprises 129 residues: ATP synthase epsilon chain (129 aa).

The protein belongs to the ATPase epsilon chain family. F-type ATPases have 2 components, CF(1) - the catalytic core - and CF(0) - the membrane proton channel. CF(1) has five subunits: alpha(3), beta(3), gamma(1), delta(1), epsilon(1). CF(0) has three main subunits: a, b and c.

Its subcellular location is the cell inner membrane. In terms of biological role, produces ATP from ADP in the presence of a proton gradient across the membrane. The protein is ATP synthase epsilon chain of Campylobacter concisus (strain 13826).